We begin with the raw amino-acid sequence, 339 residues long: Enhancer of mRNA-decapping protein 1 (339 aa).

Disordered regions lie at residues 1-240 (MMMH…PPRY) and 309-339 (FPVN…SAKK). Over residues 13–25 (SPGSENHSNPASR) the composition is skewed to polar residues. 2 stretches are compositionally biased toward basic and acidic residues: residues 26–38 (EQSK…ERRL) and 91–100 (DNKEKNKKLL). The segment covering 111-131 (NFSFYSESNSNSNSNVSSNSN) has biased composition (low complexity). Basic and acidic residues predominate over residues 163–173 (RPDKNGKKGPV). Over residues 196–212 (FQRTSPKQQANTINDEN) the composition is skewed to polar residues. The span at 213 to 237 (SSPSSSASSVSMSSPRPVAGAVAAP) shows a compositional bias: low complexity.

It belongs to the EDC family.

Its subcellular location is the cytoplasm. Its function is as follows. mRNA-binding protein which stimulates mRNA decapping. In Scheffersomyces stipitis (strain ATCC 58785 / CBS 6054 / NBRC 10063 / NRRL Y-11545) (Yeast), this protein is Enhancer of mRNA-decapping protein 1 (EDC1).